A 221-amino-acid polypeptide reads, in one-letter code: Transmembrane emp24 domain-containing protein 3 (221 aa).

The N-terminal stretch at 1-30 is a signal peptide; it reads MGNEVPRASSFQMLMLLLLLLLLRAERLRG. Residues 31 to 184 are Lumenal-facing; it reads AELTFELPDN…RAEDLNSRVS (154 aa). In terms of domain architecture, GOLD spans 42–124; that stretch reads KQCFHEEVEQ…HKTVYFDFQV (83 aa). A Dimethylated arginine modification is found at R103. The helical transmembrane segment at 185-205 threads the bilayer; the sequence is YWSVGETIALFVVSFSQVLLL. Over 206–221 the chain is Cytoplasmic; it reads KSFFTEKRPINRAVHS. Residues 208 to 209 carry the COPII vesicle coat-binding motif; it reads FF. The COPI vesicle coat-binding motif lies at 208-221; sequence FFTEKRPINRAVHS.

The protein belongs to the EMP24/GP25L family. As to quaternary structure, monomer in endoplasmic reticulum, endoplasmic reticulum-Golgi intermediate compartment and cis-Golgi network. Interacts (via C-terminus) with COPG1; the interaction involves dimeric TMED3; however, there are conflicting reports on the interaction. Interacts with GORASP1 and GORASP2.

It is found in the endoplasmic reticulum-Golgi intermediate compartment membrane. It localises to the golgi apparatus. The protein resides in the cis-Golgi network membrane. The protein localises to the golgi stack membrane. Its subcellular location is the endoplasmic reticulum membrane. It is found in the cytoplasmic vesicle. It localises to the COPI-coated vesicle membrane. Functionally, potential role in vesicular protein trafficking, mainly in the early secretory pathway. Contributes to the coupled localization of TMED2 and TMED10 in the cis-Golgi network. This Rattus norvegicus (Rat) protein is Transmembrane emp24 domain-containing protein 3 (Tmed3).